Reading from the N-terminus, the 423-residue chain is UDP-N-acetylglucosamine 1-carboxyvinyltransferase (423 aa).

22-23 (KN) contributes to the phosphoenolpyruvate binding site. A UDP-N-acetyl-alpha-D-glucosamine-binding site is contributed by Arg-93. Cys-117 functions as the Proton donor in the catalytic mechanism. Cys-117 is modified (2-(S-cysteinyl)pyruvic acid O-phosphothioketal). UDP-N-acetyl-alpha-D-glucosamine contacts are provided by Asp-305 and Ile-327.

Belongs to the EPSP synthase family. MurA subfamily.

Its subcellular location is the cytoplasm. It carries out the reaction phosphoenolpyruvate + UDP-N-acetyl-alpha-D-glucosamine = UDP-N-acetyl-3-O-(1-carboxyvinyl)-alpha-D-glucosamine + phosphate. It functions in the pathway cell wall biogenesis; peptidoglycan biosynthesis. Cell wall formation. Adds enolpyruvyl to UDP-N-acetylglucosamine. The chain is UDP-N-acetylglucosamine 1-carboxyvinyltransferase from Acidithiobacillus ferrooxidans (strain ATCC 23270 / DSM 14882 / CIP 104768 / NCIMB 8455) (Ferrobacillus ferrooxidans (strain ATCC 23270)).